The sequence spans 406 residues: Formate-dependent phosphoribosylglycinamide formyltransferase (406 aa).

N(1)-(5-phospho-beta-D-ribosyl)glycinamide contacts are provided by residues 28-29 (EL) and Glu88. ATP contacts are provided by residues Arg121, Lys162, 167 to 172 (SSGKGQ), 202 to 205 (EGFI), and Glu210. An ATP-grasp domain is found at 126-320 (RLAAEELGCA…EFELHAKAIL (195 aa)). Mg(2+)-binding residues include Glu279 and Glu291. N(1)-(5-phospho-beta-D-ribosyl)glycinamide contacts are provided by residues Asp298, Lys367, and 374 to 375 (RR).

This sequence belongs to the PurK/PurT family. In terms of assembly, homodimer.

The catalysed reaction is N(1)-(5-phospho-beta-D-ribosyl)glycinamide + formate + ATP = N(2)-formyl-N(1)-(5-phospho-beta-D-ribosyl)glycinamide + ADP + phosphate + H(+). The protein operates within purine metabolism; IMP biosynthesis via de novo pathway; N(2)-formyl-N(1)-(5-phospho-D-ribosyl)glycinamide from N(1)-(5-phospho-D-ribosyl)glycinamide (formate route): step 1/1. Its function is as follows. Involved in the de novo purine biosynthesis. Catalyzes the transfer of formate to 5-phospho-ribosyl-glycinamide (GAR), producing 5-phospho-ribosyl-N-formylglycinamide (FGAR). Formate is provided by PurU via hydrolysis of 10-formyl-tetrahydrofolate. This is Formate-dependent phosphoribosylglycinamide formyltransferase from Janthinobacterium sp. (strain Marseille) (Minibacterium massiliensis).